The chain runs to 139 residues: MGETVRFGISIDDKLLESFDRLIEQKGYMNRSEAVRDLIRAALVELKWEGGEEETVGTVTLVYNHHVRDLSDKLTEQQHSHHNEIVSALHVHLDAHNCLEVLVVRGKAREVKKIADELIGVKGVKHGKLVMTTTGEELH.

Ni(2+) is bound by residues His79, His90, His92, and Cys98.

This sequence belongs to the transcriptional regulatory CopG/NikR family. Ni(2+) is required as a cofactor.

Functionally, transcriptional regulator. The sequence is that of Putative nickel-responsive regulator from Geobacter metallireducens (strain ATCC 53774 / DSM 7210 / GS-15).